Consider the following 175-residue polypeptide: UPF0178 protein GOX1710 (175 aa).

It belongs to the UPF0178 family.

The polypeptide is UPF0178 protein GOX1710 (Gluconobacter oxydans (strain 621H) (Gluconobacter suboxydans)).